We begin with the raw amino-acid sequence, 112 residues long: uncharacterized protein (112 aa).

Residues 82-104 (IFFGFSIIASYFLKFHLLYVILL) traverse the membrane as a helical segment.

It is found in the membrane. This is an uncharacterized protein from Pasteurella multocida (strain Pm70).